We begin with the raw amino-acid sequence, 188 residues long: Elongation factor P (188 aa).

Position 34 is an N6-(3,6-diaminohexanoyl)-5-hydroxylysine (K34).

This sequence belongs to the elongation factor P family. In terms of processing, may be beta-lysylated on the epsilon-amino group of Lys-34 by the combined action of EpmA and EpmB, and then hydroxylated on the C5 position of the same residue by EpmC (if this protein is present). Lysylation is critical for the stimulatory effect of EF-P on peptide-bond formation. The lysylation moiety may extend toward the peptidyltransferase center and stabilize the terminal 3-CCA end of the tRNA. Hydroxylation of the C5 position on Lys-34 may allow additional potential stabilizing hydrogen-bond interactions with the P-tRNA.

The protein localises to the cytoplasm. It functions in the pathway protein biosynthesis; polypeptide chain elongation. In terms of biological role, involved in peptide bond synthesis. Alleviates ribosome stalling that occurs when 3 or more consecutive Pro residues or the sequence PPG is present in a protein, possibly by augmenting the peptidyl transferase activity of the ribosome. Modification of Lys-34 is required for alleviation. The sequence is that of Elongation factor P from Erwinia tasmaniensis (strain DSM 17950 / CFBP 7177 / CIP 109463 / NCPPB 4357 / Et1/99).